Here is a 249-residue protein sequence, read N- to C-terminus: 5'-nucleotidase SurE (249 aa).

A divalent metal cation contacts are provided by aspartate 8, aspartate 9, serine 39, and asparagine 91.

Belongs to the SurE nucleotidase family. A divalent metal cation serves as cofactor.

It localises to the cytoplasm. It catalyses the reaction a ribonucleoside 5'-phosphate + H2O = a ribonucleoside + phosphate. Nucleotidase that shows phosphatase activity on nucleoside 5'-monophosphates. The chain is 5'-nucleotidase SurE from Pseudomonas fluorescens (strain SBW25).